Reading from the N-terminus, the 148-residue chain is Urease accessory protein UreE (148 aa).

It belongs to the UreE family.

It is found in the cytoplasm. In terms of biological role, involved in urease metallocenter assembly. Binds nickel. Probably functions as a nickel donor during metallocenter assembly. In Aliarcobacter butzleri (strain RM4018) (Arcobacter butzleri), this protein is Urease accessory protein UreE.